A 412-amino-acid polypeptide reads, in one-letter code: [Pyruvate dehydrogenase (acetyl-transferring)] kinase isozyme 4, mitochondrial (412 aa).

Residues 138-368 (ILEYKDTCTV…DAIIYLKALS (231 aa)) form the Histidine kinase domain. ATP is bound by residues 254 to 261 (ELFKNAMR), aspartate 293, 312 to 313 (ST), and 329 to 334 (GFGYGL).

It belongs to the PDK/BCKDK protein kinase family. Homodimer. Interacts with the pyruvate dehydrogenase complex subunit DLAT, and is part of the multimeric pyruvate dehydrogenase complex that contains multiple copies of pyruvate dehydrogenase (E1), dihydrolipoamide acetyltransferase (DLAT, E2) and lipoamide dehydrogenase (DLD, E3). Detected in skeletal muscle and heart.

The protein resides in the mitochondrion matrix. The enzyme catalyses L-seryl-[pyruvate dehydrogenase E1 alpha subunit] + ATP = O-phospho-L-seryl-[pyruvate dehydrogenase E1 alpha subunit] + ADP + H(+). In terms of biological role, kinase that plays a key role in regulation of glucose and fatty acid metabolism and homeostasis via phosphorylation of the pyruvate dehydrogenase subunits PDHA1 and PDHA2. This inhibits pyruvate dehydrogenase activity, and thereby regulates metabolite flux through the tricarboxylic acid cycle, down-regulates aerobic respiration and inhibits the formation of acetyl-coenzyme A from pyruvate. Inhibition of pyruvate dehydrogenase decreases glucose utilization and increases fat metabolism in response to prolonged fasting and starvation. Plays an important role in maintaining normal blood glucose levels under starvation, and is involved in the insulin signaling cascade. Via its regulation of pyruvate dehydrogenase activity, plays an important role in maintaining normal blood pH and in preventing the accumulation of ketone bodies under starvation. In the fed state, mediates cellular responses to glucose levels and to a high-fat diet. Regulates both fatty acid oxidation and de novo fatty acid biosynthesis. Plays a role in the generation of reactive oxygen species. Protects detached epithelial cells against anoikis. Plays a role in cell proliferation via its role in regulating carbohydrate and fatty acid metabolism. The protein is [Pyruvate dehydrogenase (acetyl-transferring)] kinase isozyme 4, mitochondrial (PDK4) of Ictidomys tridecemlineatus (Thirteen-lined ground squirrel).